Here is a 190-residue protein sequence, read N- to C-terminus: Segregation and condensation protein B (190 aa).

Belongs to the ScpB family. In terms of assembly, homodimer. Homodimerization may be required to stabilize the binding of ScpA to the Smc head domains. Component of a cohesin-like complex composed of ScpA, ScpB and the Smc homodimer, in which ScpA and ScpB bind to the head domain of Smc. The presence of the three proteins is required for the association of the complex with DNA.

The protein localises to the cytoplasm. In terms of biological role, participates in chromosomal partition during cell division. May act via the formation of a condensin-like complex containing Smc and ScpA that pull DNA away from mid-cell into both cell halves. The polypeptide is Segregation and condensation protein B (Ruminiclostridium cellulolyticum (strain ATCC 35319 / DSM 5812 / JCM 6584 / H10) (Clostridium cellulolyticum)).